Reading from the N-terminus, the 170-residue chain is MSVLQVLTFPDDRLRTVAKPVEKVTPEIQKIVDDMIETMYDEEGIGLAATQVDIHQRIVVIDISESRNEPMVLINPEILEKRGEDGIEEGCLSVPGARALVPRAAEVTVKALDRDGHEFTLEADDLLAICIQHELDHLQGKLFVDYLSPLKRKRIQDKLAKIKRFNEKQR.

Positions 91 and 133 each coordinate Fe cation. Glutamate 134 is a catalytic residue. Position 137 (histidine 137) interacts with Fe cation.

It belongs to the polypeptide deformylase family. Fe(2+) serves as cofactor.

It carries out the reaction N-terminal N-formyl-L-methionyl-[peptide] + H2O = N-terminal L-methionyl-[peptide] + formate. Its function is as follows. Removes the formyl group from the N-terminal Met of newly synthesized proteins. Requires at least a dipeptide for an efficient rate of reaction. N-terminal L-methionine is a prerequisite for activity but the enzyme has broad specificity at other positions. This is Peptide deformylase 1 from Vibrio vulnificus (strain CMCP6).